The primary structure comprises 271 residues: Probable ribosomal RNA small subunit methyltransferase A (271 aa).

Residues His19, Leu21, Gly46, Glu67, Asp92, and Asn107 each contribute to the S-adenosyl-L-methionine site.

The protein belongs to the class I-like SAM-binding methyltransferase superfamily. rRNA adenine N(6)-methyltransferase family. RsmA subfamily.

Its subcellular location is the cytoplasm. Its function is as follows. Specifically dimethylates two adjacent adenosines in the loop of a conserved hairpin near the 3'-end of 16S rRNA in the 30S particle. May play a critical role in biogenesis of 30S subunits. In Methanosarcina mazei (strain ATCC BAA-159 / DSM 3647 / Goe1 / Go1 / JCM 11833 / OCM 88) (Methanosarcina frisia), this protein is Probable ribosomal RNA small subunit methyltransferase A.